The chain runs to 58 residues: Large ribosomal subunit protein bL32 (58 aa).

The disordered stretch occupies residues 1 to 24 (MAVPKKKTSKSKRDKRKATWKRKA).

The protein belongs to the bacterial ribosomal protein bL32 family.

This Synechococcus sp. (strain ATCC 27144 / PCC 6301 / SAUG 1402/1) (Anacystis nidulans) protein is Large ribosomal subunit protein bL32.